A 503-amino-acid polypeptide reads, in one-letter code: Aspartyl/glutamyl-tRNA(Asn/Gln) amidotransferase subunit B (503 aa).

It belongs to the GatB/GatE family. GatB subfamily. Heterotrimer of A, B and C subunits.

It carries out the reaction L-glutamyl-tRNA(Gln) + L-glutamine + ATP + H2O = L-glutaminyl-tRNA(Gln) + L-glutamate + ADP + phosphate + H(+). It catalyses the reaction L-aspartyl-tRNA(Asn) + L-glutamine + ATP + H2O = L-asparaginyl-tRNA(Asn) + L-glutamate + ADP + phosphate + 2 H(+). Its function is as follows. Allows the formation of correctly charged Asn-tRNA(Asn) or Gln-tRNA(Gln) through the transamidation of misacylated Asp-tRNA(Asn) or Glu-tRNA(Gln) in organisms which lack either or both of asparaginyl-tRNA or glutaminyl-tRNA synthetases. The reaction takes place in the presence of glutamine and ATP through an activated phospho-Asp-tRNA(Asn) or phospho-Glu-tRNA(Gln). The chain is Aspartyl/glutamyl-tRNA(Asn/Gln) amidotransferase subunit B from Ruegeria pomeroyi (strain ATCC 700808 / DSM 15171 / DSS-3) (Silicibacter pomeroyi).